We begin with the raw amino-acid sequence, 243 residues long: Vesicle-associated membrane protein-associated protein B/C (243 aa).

Alanine 2 carries the N-acetylalanine modification. Residues 2–222 (AKVEQVLSLE…PTGKEEGLST (221 aa)) lie on the Cytoplasmic side of the membrane. An MSP domain is found at 7–124 (VLSLEPQHEL…MDSKLRCVFE (118 aa)). A Phosphoserine modification is found at serine 146. A Glycyl lysine isopeptide (Lys-Gly) (interchain with G-Cter in SUMO1) cross-link involves residue lysine 147. Threonine 150 bears the Phosphothreonine mark. Residues serine 156, serine 158, serine 159, serine 160, and serine 206 each carry the phosphoserine modification. Positions 159-196 (SSLDDTEVKKVMEECKRLQGEVQRLREENKQFKEEDGL) form a coiled coil. A helical; Anchor for type IV membrane protein transmembrane segment spans residues 223–243 (RLLALVVLFFIVGVIIGKIAL).

This sequence belongs to the VAMP-associated protein (VAP) (TC 9.B.17) family. In terms of assembly, homodimer, and heterodimer with VAPA. Interacts with VAMP1 and VAMP2. Interacts (via MSP domain) with ZFYVE27. Interacts with RMDN3. Interacts with KIF5A in a ZFYVE27-dependent manner. Interacts (via MSP domain) with STARD3 (via phospho-FFAT motif). Interacts with STARD3NL (via FFAT motif). Interacts with CERT1. Interacts with PLEKHA3 and SACM1L to form a ternary complex. Interacts with VPS13A (via FFAT motif). Interacts with RB1CC1 (via phosphorylated FFAT motif), MIGA2 (via phosphorylated FFAT motif), RMDN3 (via phosphorylated FFAT motif), OSBPL1A (via FFAT motif), KCNB1 (via phosphorylated FFAT motif) and KCNB2 (via phosphorylated FFAT motif). Interacts (via MSP domain) with WDR44 (via FFAT motif); the interactions connect the endoplasmic reticulum (ER) with the endosomal tubule. (Microbial infection) Interacts (via MSP domain) with hepatitis C virus (HCV) non-structural protein 5A (via disordered domain D3). Interacts with HCV RNA-directed RNA polymerase. In terms of tissue distribution, ubiquitous. Isoform 1 predominates.

Its subcellular location is the endoplasmic reticulum membrane. Endoplasmic reticulum (ER)-anchored protein that mediates the formation of contact sites between the ER and endosomes via interaction with FFAT motif-containing proteins such as STARD3 or WDR44. Interacts with STARD3 in a FFAT motif phosphorylation dependent manner. Via interaction with WDR44 participates in neosynthesized protein export. Participates in the endoplasmic reticulum unfolded protein response (UPR) by inducing ERN1/IRE1 activity. Involved in cellular calcium homeostasis regulation. The chain is Vesicle-associated membrane protein-associated protein B/C from Homo sapiens (Human).